The primary structure comprises 326 residues: Phospho-N-acetylmuramoyl-pentapeptide-transferase (326 aa).

The next 9 membrane-spanning stretches (helical) occupy residues 3–23, 51–71, 79–99, 115–135, 138–158, 169–189, 195–215, 221–243, and 304–324; these read ISIS…PAFI, TMGG…VALF, VGMI…DDFL, LALQ…GGDM, IFGY…FWLV, GIDG…GVIA, MDIL…FVFN, VFMG…MALH, and VDFF…AILY.

The protein belongs to the glycosyltransferase 4 family. MraY subfamily. Mg(2+) is required as a cofactor.

It is found in the cell membrane. The catalysed reaction is UDP-N-acetyl-alpha-D-muramoyl-L-alanyl-gamma-D-glutamyl-L-lysyl-D-alanyl-D-alanine + di-trans,octa-cis-undecaprenyl phosphate = Mur2Ac(oyl-L-Ala-gamma-D-Glu-L-Lys-D-Ala-D-Ala)-di-trans,octa-cis-undecaprenyl diphosphate + UMP. The protein operates within cell wall biogenesis; peptidoglycan biosynthesis. Catalyzes the initial step of the lipid cycle reactions in the biosynthesis of the cell wall peptidoglycan: transfers peptidoglycan precursor phospho-MurNAc-pentapeptide from UDP-MurNAc-pentapeptide onto the lipid carrier undecaprenyl phosphate, yielding undecaprenyl-pyrophosphoryl-MurNAc-pentapeptide, known as lipid I. In Streptococcus pneumoniae (strain Hungary19A-6), this protein is Phospho-N-acetylmuramoyl-pentapeptide-transferase.